Reading from the N-terminus, the 90-residue chain is Small ribosomal subunit protein uS15 (90 aa).

Belongs to the universal ribosomal protein uS15 family. In terms of assembly, part of the 30S ribosomal subunit. Forms a bridge to the 50S subunit in the 70S ribosome, contacting the 23S rRNA.

Its function is as follows. One of the primary rRNA binding proteins, it binds directly to 16S rRNA where it helps nucleate assembly of the platform of the 30S subunit by binding and bridging several RNA helices of the 16S rRNA. Functionally, forms an intersubunit bridge (bridge B4) with the 23S rRNA of the 50S subunit in the ribosome. This Campylobacter hominis (strain ATCC BAA-381 / DSM 21671 / CCUG 45161 / LMG 19568 / NCTC 13146 / CH001A) protein is Small ribosomal subunit protein uS15.